Consider the following 651-residue polypeptide: Kinesin-like protein KIF22-A (651 aa).

In terms of domain architecture, Kinesin motor spans 31–359 (RVRVAVRLRP…LNFAAKSKQI (329 aa)). Residue 116–123 (GPTGAGKT) participates in ATP binding. The tract at residues 366–413 (QETTQTVVQPAMKRPREETGHIAGSQKRKKSKNDSTESSPNSSMDTAG) is disordered. The segment covering 401 to 410 (TESSPNSSMD) has biased composition (polar residues). Residues 452-498 (KRERMALLKKWEESQMEIERLKEKQKELEQKAMEAEARLEKSNNSDL) adopt a coiled-coil conformation. The Important for regulated proteolytic degradation signature appears at 561–564 (GLEN).

This sequence belongs to the TRAFAC class myosin-kinesin ATPase superfamily. Kinesin family. Ubiquitinated, leading to its subsequent proteasomal degradation.

The protein localises to the nucleus. It is found in the cytoplasm. The protein resides in the cytoskeleton. In terms of biological role, kinesin family member that is involved in spindle formation and the movements of chromosomes during mitosis and meiosis. Binds to microtubules and to DNA. The polypeptide is Kinesin-like protein KIF22-A (kif22-a) (Xenopus laevis (African clawed frog)).